We begin with the raw amino-acid sequence, 281 residues long: sn-glycerol-3-phosphate transport system permease protein UgpE (281 aa).

6 helical membrane-spanning segments follow: residues 16-36 (LILG…AATL), 85-105 (FSIT…IVWF), 113-133 (FFWM…FPTV), 142-162 (LDSY…TFLF), 202-222 (ALFV…LLII), and 247-267 (WNSV…IVLV). Residues 77 to 268 (LLNSFVMAFS…IPPVVIVLVM (192 aa)) form the ABC transmembrane type-1 domain.

It belongs to the binding-protein-dependent transport system permease family. UgpAE subfamily. As to quaternary structure, the complex is composed of two ATP-binding proteins (UgpC), two transmembrane proteins (UgpA and UgpE) and a solute-binding protein (UgpB).

It localises to the cell inner membrane. Its function is as follows. Part of the ABC transporter complex UgpBAEC involved in sn-glycerol-3-phosphate (G3P) import. Probably responsible for the translocation of the substrate across the membrane. This Escherichia coli O6:K15:H31 (strain 536 / UPEC) protein is sn-glycerol-3-phosphate transport system permease protein UgpE (ugpE).